The following is a 212-amino-acid chain: Imidazole glycerol phosphate synthase subunit HisH (212 aa).

Residues 2–212 form the Glutamine amidotransferase type-1 domain; the sequence is QTAIIDYGMG…LTMLKNFLNW (211 aa). The active-site Nucleophile is Cys-85. Residues His-194 and Glu-196 contribute to the active site.

Heterodimer of HisH and HisF.

Its subcellular location is the cytoplasm. The catalysed reaction is 5-[(5-phospho-1-deoxy-D-ribulos-1-ylimino)methylamino]-1-(5-phospho-beta-D-ribosyl)imidazole-4-carboxamide + L-glutamine = D-erythro-1-(imidazol-4-yl)glycerol 3-phosphate + 5-amino-1-(5-phospho-beta-D-ribosyl)imidazole-4-carboxamide + L-glutamate + H(+). It carries out the reaction L-glutamine + H2O = L-glutamate + NH4(+). Its pathway is amino-acid biosynthesis; L-histidine biosynthesis; L-histidine from 5-phospho-alpha-D-ribose 1-diphosphate: step 5/9. IGPS catalyzes the conversion of PRFAR and glutamine to IGP, AICAR and glutamate. The HisH subunit catalyzes the hydrolysis of glutamine to glutamate and ammonia as part of the synthesis of IGP and AICAR. The resulting ammonia molecule is channeled to the active site of HisF. The sequence is that of Imidazole glycerol phosphate synthase subunit HisH from Neisseria gonorrhoeae (strain ATCC 700825 / FA 1090).